The chain runs to 1107 residues: Lon protease homolog, mitochondrial (1107 aa).

The N-terminal 31 residues, Met-1 to Ile-31, are a transit peptide targeting the mitochondrion. 2 disordered regions span residues Arg-32–Lys-152 and Pro-273–Pro-329. A compositionally biased stretch (polar residues) spans Thr-51–Thr-60. The segment covering Glu-80–Gln-101 has biased composition (basic and acidic residues). The span at Gly-122–Asp-141 shows a compositional bias: gly residues. Residues Gly-142–Lys-152 are compositionally biased toward basic and acidic residues. The region spanning Val-166–His-441 is the Lon N-terminal domain. Residue Gly-594–Thr-601 coordinates ATP. The disordered stretch occupies residues Pro-808–Ala-858. The segment covering Glu-815–Glu-831 has biased composition (basic and acidic residues). Residues Ala-832–Glu-845 are compositionally biased toward low complexity. A compositionally biased stretch (basic and acidic residues) spans Ala-846–Arg-856. Positions Val-891–Lys-1077 constitute a Lon proteolytic domain. Residues Ser-983 and Lys-1026 contribute to the active site. The interval Lys-1085–Glu-1107 is disordered.

Belongs to the peptidase S16 family. Homohexamer or homoheptamer. Organized in a ring with a central cavity.

It localises to the mitochondrion matrix. The enzyme catalyses Hydrolysis of proteins in presence of ATP.. Functionally, ATP-dependent serine protease that mediates the selective degradation of misfolded, unassembled or oxidatively damaged polypeptides as well as certain short-lived regulatory proteins in the mitochondrial matrix. May also have a chaperone function in the assembly of inner membrane protein complexes. Participates in the regulation of mitochondrial gene expression and in the maintenance of the integrity of the mitochondrial genome. Binds to mitochondrial DNA in a site-specific manner. This chain is Lon protease homolog, mitochondrial (pim1), found in Neurospora crassa (strain ATCC 24698 / 74-OR23-1A / CBS 708.71 / DSM 1257 / FGSC 987).